The chain runs to 377 residues: Nitric oxide reductase FlRd-NAD(+) reductase (377 aa).

Belongs to the FAD-dependent oxidoreductase family. Requires FAD as cofactor.

Its subcellular location is the cytoplasm. The enzyme catalyses 2 reduced [nitric oxide reductase rubredoxin domain] + NAD(+) + H(+) = 2 oxidized [nitric oxide reductase rubredoxin domain] + NADH. It participates in nitrogen metabolism; nitric oxide reduction. Functionally, one of at least two accessory proteins for anaerobic nitric oxide (NO) reductase. Reduces the rubredoxin moiety of NO reductase. The protein is Nitric oxide reductase FlRd-NAD(+) reductase of Escherichia coli O6:H1 (strain CFT073 / ATCC 700928 / UPEC).